Consider the following 117-residue polypeptide: Iron-sulfur cluster insertion protein ErpA (117 aa).

Iron-sulfur cluster-binding residues include cysteine 45, cysteine 109, and cysteine 111.

It belongs to the HesB/IscA family. In terms of assembly, homodimer. Requires iron-sulfur cluster as cofactor.

In terms of biological role, required for insertion of 4Fe-4S clusters for at least IspG. The chain is Iron-sulfur cluster insertion protein ErpA from Chromohalobacter salexigens (strain ATCC BAA-138 / DSM 3043 / CIP 106854 / NCIMB 13768 / 1H11).